The primary structure comprises 156 residues: ATP synthase subunit b (156 aa).

Residues 7-27 (LIGQTIAFIVFVWFCMKFVWP) form a helical membrane-spanning segment.

This sequence belongs to the ATPase B chain family. F-type ATPases have 2 components, F(1) - the catalytic core - and F(0) - the membrane proton channel. F(1) has five subunits: alpha(3), beta(3), gamma(1), delta(1), epsilon(1). F(0) has three main subunits: a(1), b(2) and c(10-14). The alpha and beta chains form an alternating ring which encloses part of the gamma chain. F(1) is attached to F(0) by a central stalk formed by the gamma and epsilon chains, while a peripheral stalk is formed by the delta and b chains.

The protein localises to the cell inner membrane. Functionally, f(1)F(0) ATP synthase produces ATP from ADP in the presence of a proton or sodium gradient. F-type ATPases consist of two structural domains, F(1) containing the extramembraneous catalytic core and F(0) containing the membrane proton channel, linked together by a central stalk and a peripheral stalk. During catalysis, ATP synthesis in the catalytic domain of F(1) is coupled via a rotary mechanism of the central stalk subunits to proton translocation. Component of the F(0) channel, it forms part of the peripheral stalk, linking F(1) to F(0). The polypeptide is ATP synthase subunit b (Idiomarina loihiensis (strain ATCC BAA-735 / DSM 15497 / L2-TR)).